Reading from the N-terminus, the 394-residue chain is Elongation factor Tu 2 (394 aa).

The tr-type G domain occupies 10–204; the sequence is KPHVNVGTIG…YLDSYIPEPE (195 aa). The segment at 19–26 is G1; that stretch reads GHVDHGKT. GTP is bound at residue 19–26; the sequence is GHVDHGKT. Position 26 (Thr26) interacts with Mg(2+). The segment at 60–64 is G2; it reads GITIN. The tract at residues 81-84 is G3; it reads DCPG. GTP contacts are provided by residues 81–85 and 136–139; these read DCPGH and NKCD. Residues 136 to 139 form a G4 region; sequence NKCD. Positions 174–176 are G5; it reads SAL.

The protein belongs to the TRAFAC class translation factor GTPase superfamily. Classic translation factor GTPase family. EF-Tu/EF-1A subfamily. Monomer.

The protein resides in the cytoplasm. The enzyme catalyses GTP + H2O = GDP + phosphate + H(+). GTP hydrolase that promotes the GTP-dependent binding of aminoacyl-tRNA to the A-site of ribosomes during protein biosynthesis. This chain is Elongation factor Tu 2, found in Yersinia pseudotuberculosis serotype O:1b (strain IP 31758).